Consider the following 448-residue polypeptide: Probable xyloglucan 6-xylosyltransferase 1 (448 aa).

Residues 1-19 (MWVAERVVGERRMREIQRF) lie on the Cytoplasmic side of the membrane. A helical; Signal-anchor for type II membrane protein transmembrane segment spans residues 20–42 (ARNAKLTVVCLLLTVVVLRGTVG). At 43–448 (AGKFGTPQQD…AFKAMKTTST (406 aa)) the chain is on the lumenal side. Positions 71-113 (HHDALSRGGGSSSSSGRAAQRDDEPDPPPRTLRDPPYTLGPKI) are disordered. N-linked (GlcNAc...) asparagine glycosylation is present at Asn-421.

The protein belongs to the glycosyltransferase 34 family.

It localises to the golgi apparatus membrane. It carries out the reaction Transfers an alpha-D-xylosyl residue from UDP-D-xylose to a glucose residue in xyloglucan, forming an alpha-(1-&gt;6)-D-xylosyl-D-glucose linkage.. Its function is as follows. Probable xyloglucan xylosyltransferase involved in the biosynthesis of xyloglucan in roots. The polypeptide is Probable xyloglucan 6-xylosyltransferase 1 (Oryza sativa subsp. indica (Rice)).